A 224-amino-acid chain; its full sequence is Artemin (224 aa).

A signal peptide spans 1 to 39 (MELGLAEPTALSHCLRPRWQSAWWPTLAVLALLSCVTEA). Residues 40–111 (SLDPMSRSPA…AALRGARAAR (72 aa)) constitute a propeptide that is removed on maturation. The tract at residues 43-124 (PMSRSPAARD…RSSRARTTDA (82 aa)) is disordered. Pro residues predominate over residues 80 to 95 (RPPPQSPQPAPPPPGP). The span at 96 to 116 (ALQSPPAALRGARAARAGTRS) shows a compositional bias: low complexity. Cystine bridges form between C127-C192, C154-C220, and C158-C222. N206 is a glycosylation site (N-linked (GlcNAc...) asparagine).

The protein belongs to the TGF-beta family. GDNF subfamily. In terms of assembly, homodimer; disulfide-linked. Interacts with GFRA3 coreceptor and RET: forms a 2:2:2 ternary complex composed of ARTN ligand, GFRA3 and RET receptor.

It localises to the secreted. Functionally, growth factor that supports the survival of sensory and sympathetic peripheral neurons in culture and also supports the survival of dopaminergic neurons of the ventral mid-brain. Acts by binding to its coreceptor, GFRA3, leading to autophosphorylation and activation of the RET receptor. Strong attractant of gut hematopoietic cells thus promoting the formation Peyer's patch-like structures, a major component of the gut-associated lymphoid tissue. The sequence is that of Artemin from Mus musculus (Mouse).